Consider the following 131-residue polypeptide: Fluoride-specific ion channel FluC (131 aa).

Helical transmembrane passes span 4–24 (LWIMIGSALGGAARFWVTGFV), 30–50 (GIFPWGTVLINVSGSFLIGFF), 68–88 (LFVMIGLCGGFTTFSSFSLQT), and 104–124 (IALSVVFCLLAVWLGHVVAVA). The Na(+) site is built by glycine 76 and threonine 79.

It belongs to the fluoride channel Fluc/FEX (TC 1.A.43) family.

The protein resides in the cell inner membrane. The catalysed reaction is fluoride(in) = fluoride(out). Na(+) is not transported, but it plays an essential structural role and its presence is essential for fluoride channel function. Functionally, fluoride-specific ion channel. Important for reducing fluoride concentration in the cell, thus reducing its toxicity. The polypeptide is Fluoride-specific ion channel FluC (Methylocella silvestris (strain DSM 15510 / CIP 108128 / LMG 27833 / NCIMB 13906 / BL2)).